The primary structure comprises 90 residues: Probable Fe(2+)-trafficking protein (90 aa).

Belongs to the Fe(2+)-trafficking protein family. Monomer.

Could be a mediator in iron transactions between iron acquisition and iron-requiring processes, such as synthesis and/or repair of Fe-S clusters in biosynthetic enzymes. The chain is Probable Fe(2+)-trafficking protein from Hamiltonella defensa subsp. Acyrthosiphon pisum (strain 5AT).